The chain runs to 1154 residues: ATP-dependent RNA helicase DBP10 (1154 aa).

The segment at 16–58 (FAARTISATSKPNRNDATASSSKPQKRARRSTKGSDDDGNDDF) is disordered. Residues 21–38 (ISATSKPNRNDATASSSK) show a composition bias toward polar residues. Positions 144–172 (GSFQSMGLHPSLLRSLLIRGFTTPTPIQR) match the Q motif motif. Residues 177-363 (AIMSQPPRDV…KAGLQANPKL (187 aa)) enclose the Helicase ATP-binding domain. Residue 190–197 (ARTGSGKT) coordinates ATP. The DEAD box motif lies at 311-314 (DEAD). 4 disordered regions span residues 417 to 462 (QFNE…GPGG), 826 to 859 (IEGG…AGKA), 885 to 939 (FDTT…PNFY), and 1043 to 1154 (MPKT…GASR). Residues 438-451 (RRAEFKGKTKDKHL) are compositionally biased toward basic and acidic residues. Positions 446–602 (TKDKHLGNKR…SSHTAIAALA (157 aa)) constitute a Helicase C-terminal domain. Composition is skewed to basic residues over residues 844 to 855 (VAARNKGKKKAT) and 918 to 927 (RHTKRARTKK). Composition is skewed to basic and acidic residues over residues 1043–1061 (MPKT…ERSP) and 1098–1133 (AAKD…DTNR). Residues 1134–1154 (RAKRGAARRGRGGHGPRGASR) show a composition bias toward basic residues.

Belongs to the DEAD box helicase family. DDX54/DBP10 subfamily.

The protein localises to the nucleus. It is found in the nucleolus. The enzyme catalyses ATP + H2O = ADP + phosphate + H(+). In terms of biological role, ATP-binding RNA helicase involved in the biogenesis of 60S ribosomal subunits and is required for the normal formation of 25S and 5.8S rRNAs. In Mycosarcoma maydis (Corn smut fungus), this protein is ATP-dependent RNA helicase DBP10 (DBP10).